The primary structure comprises 101 residues: Small ribosomal subunit protein uS14 (101 aa).

This sequence belongs to the universal ribosomal protein uS14 family. As to quaternary structure, part of the 30S ribosomal subunit. Contacts proteins S3 and S10.

Functionally, binds 16S rRNA, required for the assembly of 30S particles and may also be responsible for determining the conformation of the 16S rRNA at the A site. This is Small ribosomal subunit protein uS14 from Haemophilus influenzae (strain 86-028NP).